The chain runs to 348 residues: Uroporphyrinogen decarboxylase (348 aa).

Substrate is bound by residues 27–31, phenylalanine 46, aspartate 76, tyrosine 152, serine 207, and histidine 320; that span reads RQAGR.

It belongs to the uroporphyrinogen decarboxylase family. Homodimer.

The protein localises to the cytoplasm. It catalyses the reaction uroporphyrinogen III + 4 H(+) = coproporphyrinogen III + 4 CO2. It functions in the pathway porphyrin-containing compound metabolism; protoporphyrin-IX biosynthesis; coproporphyrinogen-III from 5-aminolevulinate: step 4/4. Catalyzes the decarboxylation of four acetate groups of uroporphyrinogen-III to yield coproporphyrinogen-III. The protein is Uroporphyrinogen decarboxylase of Bacillus cereus (strain AH820).